Here is a 418-residue protein sequence, read N- to C-terminus: N-acetylglucosamine-6-phosphate deacetylase (418 aa).

Glutamate 154 lines the a divalent metal cation pocket. 165 to 166 (CH) serves as a coordination point for substrate. A divalent metal cation-binding residues include histidine 223 and histidine 244. Residues 247–248 (NA), arginine 255, and 281–284 (DGIH) contribute to the substrate site. Aspartate 306 functions as the Proton donor/acceptor in the catalytic mechanism. Residue 340–342 (TAG) participates in substrate binding.

Belongs to the metallo-dependent hydrolases superfamily. NagA family. The cofactor is a divalent metal cation.

It carries out the reaction N-acetyl-D-glucosamine 6-phosphate + H2O = D-glucosamine 6-phosphate + acetate. The polypeptide is N-acetylglucosamine-6-phosphate deacetylase (Caenorhabditis elegans).